The chain runs to 293 residues: Diaminopimelate epimerase (293 aa).

3 residues coordinate substrate: Asn15, Gln47, and Asn67. Cys76 functions as the Proton donor in the catalytic mechanism. Residues 77–78 (GN), Asn163, Asn197, and 215–216 (ER) contribute to the substrate site. The active-site Proton acceptor is the Cys224. 225-226 (GS) is a substrate binding site.

The protein belongs to the diaminopimelate epimerase family. Homodimer.

It is found in the cytoplasm. It catalyses the reaction (2S,6S)-2,6-diaminopimelate = meso-2,6-diaminopimelate. The protein operates within amino-acid biosynthesis; L-lysine biosynthesis via DAP pathway; DL-2,6-diaminopimelate from LL-2,6-diaminopimelate: step 1/1. Its function is as follows. Catalyzes the stereoinversion of LL-2,6-diaminopimelate (L,L-DAP) to meso-diaminopimelate (meso-DAP), a precursor of L-lysine and an essential component of the bacterial peptidoglycan. The polypeptide is Diaminopimelate epimerase (Chelativorans sp. (strain BNC1)).